A 120-amino-acid polypeptide reads, in one-letter code: NAD(P)H-quinone oxidoreductase subunit 3, chloroplastic (120 aa).

3 consecutive transmembrane segments (helical) span residues 10–30 (LWFF…ISEI), 64–84 (MFAL…PWAI), and 89–109 (LGIS…VGLV).

The protein belongs to the complex I subunit 3 family. NDH is composed of at least 16 different subunits, 5 of which are encoded in the nucleus.

The protein localises to the plastid. Its subcellular location is the chloroplast thylakoid membrane. It catalyses the reaction a plastoquinone + NADH + (n+1) H(+)(in) = a plastoquinol + NAD(+) + n H(+)(out). It carries out the reaction a plastoquinone + NADPH + (n+1) H(+)(in) = a plastoquinol + NADP(+) + n H(+)(out). In terms of biological role, NDH shuttles electrons from NAD(P)H:plastoquinone, via FMN and iron-sulfur (Fe-S) centers, to quinones in the photosynthetic chain and possibly in a chloroplast respiratory chain. The immediate electron acceptor for the enzyme in this species is believed to be plastoquinone. Couples the redox reaction to proton translocation, and thus conserves the redox energy in a proton gradient. This Chara vulgaris (Common stonewort) protein is NAD(P)H-quinone oxidoreductase subunit 3, chloroplastic.